The primary structure comprises 85 residues: UPF0291 protein SSA_1878 (85 aa).

Positions Gly-58–Ser-85 are disordered. Over residues Thr-62–Ser-85 the composition is skewed to basic and acidic residues.

This sequence belongs to the UPF0291 family.

It is found in the cytoplasm. In Streptococcus sanguinis (strain SK36), this protein is UPF0291 protein SSA_1878.